Consider the following 225-residue polypeptide: GTP-binding nuclear protein Ran (225 aa).

Residues 8-172 (VVAEFKLVLV…LWILRKLTGD (165 aa)) form the Small GTPase Ran-type domain. 19–26 (DGGVGKTT) is a binding site for GTP. The switch-I stretch occupies residues 38 to 46 (KRYIATQGV). GTP contacts are provided by residues glycine 69, 123 to 126 (NKVD), and 151 to 153 (SAK). Residues 69 to 85 (GQEKLGGLREGYYIGAN) are switch-II.

It belongs to the small GTPase superfamily. Ran family. In terms of assembly, monomer. Found in a nuclear export complex with RanGTP, exportin and pre-miRNA.

The protein localises to the nucleus. Functionally, GTP-binding protein involved in nucleocytoplasmic transport. Required for the import of protein into the nucleus and also for RNA export. Involved in chromatin condensation and control of cell cycle. This chain is GTP-binding nuclear protein Ran, found in Tetrahymena thermophila.